The primary structure comprises 500 residues: Probable glycine dehydrogenase (decarboxylating) subunit 2 (500 aa).

The tract at residues 1–25 (MLIFEHSRPGRRNYSQSPKAAEATD) is disordered. Lys263 carries the post-translational modification N6-(pyridoxal phosphate)lysine.

This sequence belongs to the GcvP family. C-terminal subunit subfamily. The glycine cleavage system is composed of four proteins: P, T, L and H. In this organism, the P 'protein' is a heterodimer of two subunits. Pyridoxal 5'-phosphate is required as a cofactor.

It catalyses the reaction N(6)-[(R)-lipoyl]-L-lysyl-[glycine-cleavage complex H protein] + glycine + H(+) = N(6)-[(R)-S(8)-aminomethyldihydrolipoyl]-L-lysyl-[glycine-cleavage complex H protein] + CO2. Functionally, the glycine cleavage system catalyzes the degradation of glycine. The P protein binds the alpha-amino group of glycine through its pyridoxal phosphate cofactor; CO(2) is released and the remaining methylamine moiety is then transferred to the lipoamide cofactor of the H protein. This chain is Probable glycine dehydrogenase (decarboxylating) subunit 2, found in Nitrosospira multiformis (strain ATCC 25196 / NCIMB 11849 / C 71).